A 400-amino-acid polypeptide reads, in one-letter code: MSESVRTNTSIWSKGMLSVIVAQFLSAFGDNALLFATLALLKAQFYPDWSQPVLQMVFVGAYILFAPFVGQIADSFAKGRVMMVANGLKLAGAAGICLGINPFVGYTLVGIGAAAYSPAKYGILGELTTGDKLVKANGMMEASTIAAILLGSVAGGVLADWHVIAALVACALAYAGAVAANLFIPKLVAARPGQSWRLSAMTRSFFSACVVLWRNGETRFSLVGTGLFWGAGVTLRFLLVLWVPVALGITDNATPTYLNAMVAVGIVVGAGAAAKLVTLETVSRCMPAGILIGVVVAIFSLQHALLPAYALLLLIGMLGGFFVVPLNALLQERGKKSVGAGNAIAVQNLGENSAMLLMLGLYSLAVLVGVPAVAIGIGFGVLFALAIAALWIWQRRQASY.

12 helical membrane-spanning segments follow: residues 19 to 39, 53 to 73, 91 to 111, 139 to 159, 164 to 184, 195 to 213, 227 to 247, 257 to 277, 281 to 301, 304 to 324, 352 to 372, and 373 to 393; these read VIVA…ATLA, VLQM…GQIA, AGAA…LVGI, MMEA…GVLA, IAAL…NLFI, SWRL…VVLW, LFWG…PVAL, YLNA…AKLV, TVSR…IFSL, ALLP…FFVV, NSAM…GVPA, and VAIG…LWIW.

The protein belongs to the major facilitator superfamily. LplT (TC 2.A.1.42) family.

It is found in the cell inner membrane. Functionally, catalyzes the facilitated diffusion of 2-acyl-glycero-3-phosphoethanolamine (2-acyl-GPE) into the cell. The polypeptide is Lysophospholipid transporter LplT (Salmonella paratyphi B (strain ATCC BAA-1250 / SPB7)).